Consider the following 456-residue polypeptide: Bifunctional protein GlmU (456 aa).

Residues 1 to 229 (MLNNAMSVVI…LSEVEGVNNR (229 aa)) form a pyrophosphorylase region. UDP-N-acetyl-alpha-D-glucosamine-binding positions include 11–14 (LAAG), lysine 25, glutamine 76, 81–82 (GT), 103–105 (YGD), glycine 140, glutamate 154, asparagine 169, and asparagine 227. Aspartate 105 provides a ligand contact to Mg(2+). Asparagine 227 contacts Mg(2+). A linker region spans residues 230–250 (LQLSRLERVYQSEQAEKLLLA). Positions 251 to 456 (GVMLRDPARF…EGWRRPVKKK (206 aa)) are N-acetyltransferase. Arginine 333 and lysine 351 together coordinate UDP-N-acetyl-alpha-D-glucosamine. Residue histidine 363 is the Proton acceptor of the active site. 2 residues coordinate UDP-N-acetyl-alpha-D-glucosamine: tyrosine 366 and asparagine 377. Residues alanine 380, 386-387 (NY), serine 405, alanine 423, and arginine 440 each bind acetyl-CoA.

It in the N-terminal section; belongs to the N-acetylglucosamine-1-phosphate uridyltransferase family. In the C-terminal section; belongs to the transferase hexapeptide repeat family. Homotrimer. The cofactor is Mg(2+).

The protein resides in the cytoplasm. The catalysed reaction is alpha-D-glucosamine 1-phosphate + acetyl-CoA = N-acetyl-alpha-D-glucosamine 1-phosphate + CoA + H(+). The enzyme catalyses N-acetyl-alpha-D-glucosamine 1-phosphate + UTP + H(+) = UDP-N-acetyl-alpha-D-glucosamine + diphosphate. It functions in the pathway nucleotide-sugar biosynthesis; UDP-N-acetyl-alpha-D-glucosamine biosynthesis; N-acetyl-alpha-D-glucosamine 1-phosphate from alpha-D-glucosamine 6-phosphate (route II): step 2/2. Its pathway is nucleotide-sugar biosynthesis; UDP-N-acetyl-alpha-D-glucosamine biosynthesis; UDP-N-acetyl-alpha-D-glucosamine from N-acetyl-alpha-D-glucosamine 1-phosphate: step 1/1. The protein operates within bacterial outer membrane biogenesis; LPS lipid A biosynthesis. Its function is as follows. Catalyzes the last two sequential reactions in the de novo biosynthetic pathway for UDP-N-acetylglucosamine (UDP-GlcNAc). The C-terminal domain catalyzes the transfer of acetyl group from acetyl coenzyme A to glucosamine-1-phosphate (GlcN-1-P) to produce N-acetylglucosamine-1-phosphate (GlcNAc-1-P), which is converted into UDP-GlcNAc by the transfer of uridine 5-monophosphate (from uridine 5-triphosphate), a reaction catalyzed by the N-terminal domain. This chain is Bifunctional protein GlmU, found in Shigella boydii serotype 4 (strain Sb227).